Reading from the N-terminus, the 427-residue chain is Trigger factor (427 aa).

Residues 163-248 (GDTVVIDFVG…IHEVKTKEVP (86 aa)) form the PPIase FKBP-type domain.

This sequence belongs to the FKBP-type PPIase family. Tig subfamily.

It is found in the cytoplasm. It catalyses the reaction [protein]-peptidylproline (omega=180) = [protein]-peptidylproline (omega=0). Its function is as follows. Involved in protein export. Acts as a chaperone by maintaining the newly synthesized protein in an open conformation. Functions as a peptidyl-prolyl cis-trans isomerase. The sequence is that of Trigger factor from Streptococcus agalactiae serotype III (strain NEM316).